A 725-amino-acid polypeptide reads, in one-letter code: Homeobox-leucine zipper protein HDG3 (725 aa).

Residues 1–74 (MSQSNMVPVA…PRHKKKKYNR (74 aa)) are disordered. The segment covering 11-40 (NNGDNNNDNENNNNNNNNGGTDNTNAGNDS) has biased composition (low complexity). Polar residues predominate over residues 46-64 (DSGNTSSGNHGEGLGNNQA). Basic residues predominate over residues 65–74 (PRHKKKKYNR). The homeobox DNA-binding region spans 68 to 127 (KKKKYNRHTQLQISEMEAFFRECPHPDDKQRYDLSAQLGLDPVQIKFWFQNKRTQNKNQQ). Residues 117 to 201 (QNKRTQNKNQ…SVTAEKISRL (85 aa)) adopt a coiled-coil conformation. The START domain occupies 243 to 475 (DANTKPIIME…LVRQCERISS (233 aa)).

The protein belongs to the HD-ZIP homeobox family. Class IV subfamily. In terms of assembly, interacts with AIL7/PLT7, ANT, BBM and AIL1. As to expression, expressed in siliques.

It localises to the nucleus. In terms of biological role, probable transcription factor. Seems to promote cell differentiation. This chain is Homeobox-leucine zipper protein HDG3, found in Arabidopsis thaliana (Mouse-ear cress).